The sequence spans 261 residues: Carbonic anhydrase 1 (261 aa).

The interval 1–31 (MASPDWGYDDKNGPEQWSKLYPIANGNNQSP) is disordered. Alanine 2 carries the post-translational modification N-acetylalanine. Positions 4-261 (PDWGYDDKNG…LKGRTVRASF (258 aa)) constitute an Alpha-carbonic anhydrase domain. The Proton donor/acceptor role is filled by histidine 65. 5 residues coordinate Zn(2+): histidine 65, histidine 68, histidine 95, histidine 97, and histidine 120. Substrate-binding positions include threonine 200 and 200–201 (TH). Histidine 201 serves as a coordination point for Zn(2+). The tract at residues 241–261 (PMQHNNRPTQPLKGRTVRASF) is disordered.

The protein belongs to the alpha-carbonic anhydrase family. Requires Zn(2+) as cofactor.

It localises to the cytoplasm. It catalyses the reaction hydrogencarbonate + H(+) = CO2 + H2O. It carries out the reaction urea = cyanamide + H2O. Activated by histamine, imidazole, L-adrenaline, L- and D-histidine, and L- and D-phenylalanine. Inhibited by coumarins, sulfonamide derivatives such as acetazolamide, benzenesulfonamide and derivatives (4-carboxyethylbenzene-sulfonamide, 4-carboxyethylbenzene-sulfonamide ethyl ester, 4-(acetyl-2-aminoethyl)benzene-sulfonamide, 4-aminoethylbenzene-sulfonamide), and 'prong inhibitors' BR15, BR17, BR22 and BR30. Activated by a short exposition to Foscarnet (phosphonoformate trisodium salt), but inhibited by a long one. Esterase activity weakly reduced by cyanamide. Catalyzes the reversible hydration of carbon dioxide. Can hydrate cyanamide to urea. The polypeptide is Carbonic anhydrase 1 (CA1) (Homo sapiens (Human)).